The sequence spans 201 residues: Recombination protein RecR (201 aa).

The C4-type zinc-finger motif lies at 60-75 (CSCCGNVDTSDPCTIC). A Toprim domain is found at 83–178 (ATLIVVEDVS…RVTRLAHGVP (96 aa)).

The protein belongs to the RecR family.

In terms of biological role, may play a role in DNA repair. It seems to be involved in an RecBC-independent recombinational process of DNA repair. It may act with RecF and RecO. The chain is Recombination protein RecR from Brucella ovis (strain ATCC 25840 / 63/290 / NCTC 10512).